The primary structure comprises 271 residues: Acyl-[acyl-carrier-protein]--UDP-N-acetylglucosamine O-acyltransferase (271 aa).

Belongs to the transferase hexapeptide repeat family. LpxA subfamily. In terms of assembly, homotrimer.

The protein localises to the cytoplasm. It carries out the reaction a (3R)-hydroxyacyl-[ACP] + UDP-N-acetyl-alpha-D-glucosamine = a UDP-3-O-[(3R)-3-hydroxyacyl]-N-acetyl-alpha-D-glucosamine + holo-[ACP]. It participates in glycolipid biosynthesis; lipid IV(A) biosynthesis; lipid IV(A) from (3R)-3-hydroxytetradecanoyl-[acyl-carrier-protein] and UDP-N-acetyl-alpha-D-glucosamine: step 1/6. Functionally, involved in the biosynthesis of lipid A, a phosphorylated glycolipid that anchors the lipopolysaccharide to the outer membrane of the cell. This chain is Acyl-[acyl-carrier-protein]--UDP-N-acetylglucosamine O-acyltransferase, found in Agrobacterium fabrum (strain C58 / ATCC 33970) (Agrobacterium tumefaciens (strain C58)).